A 422-amino-acid chain; its full sequence is Metallocarboxypeptidase A (422 aa).

Positions 1-17 (MRSVLSLALLAANVVTA) are cleaved as a signal peptide. The propeptide at 18–112 (AVVSPFDYSG…FEAYSAGYAP (95 aa)) is activation peptide. Positions 119–419 (SYHSYQDHLS…AGTVAMLKAV (301 aa)) constitute a Peptidase M14 domain. Residues histidine 179 and glutamate 182 each coordinate Zn(2+). Substrate-binding positions include 179–182 (HARE), arginine 237, and 254–255 (NR). A disulfide bridge links cysteine 248 with cysteine 271. Histidine 309 is a Zn(2+) binding site. A substrate-binding site is contributed by 310–311 (SY). Catalysis depends on glutamate 385, which acts as the Proton donor/acceptor.

The protein belongs to the peptidase M14 family. The cofactor is Zn(2+).

It is found in the secreted. Functionally, extracellular metalloprotease that contributes to pathogenicity. The chain is Metallocarboxypeptidase A (MCPA) from Trichophyton rubrum (Athlete's foot fungus).